A 63-amino-acid polypeptide reads, in one-letter code: Small ribosomal subunit protein eS17 (63 aa).

The protein belongs to the eukaryotic ribosomal protein eS17 family.

This is Small ribosomal subunit protein eS17 from Methanosphaerula palustris (strain ATCC BAA-1556 / DSM 19958 / E1-9c).